An 81-amino-acid chain; its full sequence is MNEQEIFEKVQTIISEQLGVDKSQVTKDANFANDLGADSLDTVELVMAIEEAFNIEIPDDAAEQISNLQQAVDFISQKVAA.

The region spanning 4–79 (QEIFEKVQTI…QAVDFISQKV (76 aa)) is the Carrier domain. O-(pantetheine 4'-phosphoryl)serine is present on serine 39.

Belongs to the acyl carrier protein (ACP) family. In terms of processing, 4'-phosphopantetheine is transferred from CoA to a specific serine of apo-ACP by AcpS. This modification is essential for activity because fatty acids are bound in thioester linkage to the sulfhydryl of the prosthetic group.

Its subcellular location is the plastid. It is found in the chloroplast. The protein operates within lipid metabolism; fatty acid biosynthesis. In terms of biological role, carrier of the growing fatty acid chain in fatty acid biosynthesis. In Guillardia theta (Cryptophyte), this protein is Acyl carrier protein.